Here is a 151-residue protein sequence, read N- to C-terminus: Deoxyuridine 5'-triphosphate nucleotidohydrolase (151 aa).

Substrate-binding positions include 71 to 73 (RSG), Asn84, and 88 to 90 (TID).

It belongs to the dUTPase family. It depends on Mg(2+) as a cofactor.

It carries out the reaction dUTP + H2O = dUMP + diphosphate + H(+). It functions in the pathway pyrimidine metabolism; dUMP biosynthesis; dUMP from dCTP (dUTP route): step 2/2. Functionally, this enzyme is involved in nucleotide metabolism: it produces dUMP, the immediate precursor of thymidine nucleotides and it decreases the intracellular concentration of dUTP so that uracil cannot be incorporated into DNA. This Gluconobacter oxydans (strain 621H) (Gluconobacter suboxydans) protein is Deoxyuridine 5'-triphosphate nucleotidohydrolase.